The primary structure comprises 209 residues: MTRHTETAILAGGCFWGMQDLLRRYPGVLHTRVGYTGGDVPNATYRNHGNHAEAIEIVFDPAVISYRQILEFFFQIHDPSTPNRQGNDLGPSYRSAIYYLNEQQRDIAEDTAADVDASHLWPGRVVTEIEPAGPFWEAEPEHQDYLERIPNGYTCHFIRRMEAPQARLKVEFVRRRGDRFRPFSALTTGGNQPGARGGLTNNTCQHPRH.

Residue C14 is part of the active site. The segment at 183 to 209 is disordered; it reads FSALTTGGNQPGARGGLTNNTCQHPRH. A compositionally biased stretch (polar residues) spans 199–209; it reads LTNNTCQHPRH.

The protein belongs to the MsrA Met sulfoxide reductase family.

It carries out the reaction L-methionyl-[protein] + [thioredoxin]-disulfide + H2O = L-methionyl-(S)-S-oxide-[protein] + [thioredoxin]-dithiol. The catalysed reaction is [thioredoxin]-disulfide + L-methionine + H2O = L-methionine (S)-S-oxide + [thioredoxin]-dithiol. Has an important function as a repair enzyme for proteins that have been inactivated by oxidation. Catalyzes the reversible oxidation-reduction of methionine sulfoxide in proteins to methionine. The protein is Peptide methionine sulfoxide reductase MsrA of Pseudomonas fluorescens.